A 651-amino-acid polypeptide reads, in one-letter code: Mitogen-activated protein kinase kinase kinase 3 (651 aa).

The Protein kinase domain maps to 68-330 (WRKGELIGCG…ATELLQHPFV (263 aa)). ATP is bound by residues 74-82 (IGCGAFGRV) and K97. The stretch at 105–130 (SASKEKTQGHIRELEEEVQLLKNLSH) forms a coiled coil. Glycyl lysine isopeptide (Lys-Gly) (interchain with G-Cter in ubiquitin) cross-links involve residues K108 and K110. D196 functions as the Proton acceptor in the catalytic mechanism. The disordered stretch occupies residues 573 to 608 (MPSPLKSSKRTLNTSRVMQSGTEPTQVNESTKKGVN). Residues 582 to 608 (RTLNTSRVMQSGTEPTQVNESTKKGVN) are compositionally biased toward polar residues. Residues 618-641 (RKWEEELYEELERHRENLRHAGAG) adopt a coiled-coil conformation.

The protein belongs to the protein kinase superfamily. STE Ser/Thr protein kinase family. MAP kinase kinase kinase subfamily. Interacts with NACK2 and MKK6. Expressed in roots and flowers.

The protein resides in the cytoplasm. It localises to the cytoskeleton. The catalysed reaction is L-seryl-[protein] + ATP = O-phospho-L-seryl-[protein] + ADP + H(+). The enzyme catalyses L-threonyl-[protein] + ATP = O-phospho-L-threonyl-[protein] + ADP + H(+). Its function is as follows. Involved in cortical microtubules organization and stabilization by regulating the phosphorylation state of microtubule-associated proteins such as MAP65-1. The protein is Mitogen-activated protein kinase kinase kinase 3 (ANP3) of Arabidopsis thaliana (Mouse-ear cress).